The primary structure comprises 117 residues: UPF0295 protein Bsph_0336 (117 aa).

Transmembrane regions (helical) follow at residues 13–33 (SFAL…IFFK) and 37–57 (ILVL…TVVY).

The protein belongs to the UPF0295 family.

Its subcellular location is the cell membrane. The sequence is that of UPF0295 protein Bsph_0336 from Lysinibacillus sphaericus (strain C3-41).